A 245-amino-acid polypeptide reads, in one-letter code: Biosynthetic peptidoglycan transglycosylase (245 aa).

A helical membrane pass occupies residues 20-42; sequence VYAGSVFAGAWLATQLFYLVQIA.

It belongs to the glycosyltransferase 51 family.

The protein localises to the cell inner membrane. It carries out the reaction [GlcNAc-(1-&gt;4)-Mur2Ac(oyl-L-Ala-gamma-D-Glu-L-Lys-D-Ala-D-Ala)](n)-di-trans,octa-cis-undecaprenyl diphosphate + beta-D-GlcNAc-(1-&gt;4)-Mur2Ac(oyl-L-Ala-gamma-D-Glu-L-Lys-D-Ala-D-Ala)-di-trans,octa-cis-undecaprenyl diphosphate = [GlcNAc-(1-&gt;4)-Mur2Ac(oyl-L-Ala-gamma-D-Glu-L-Lys-D-Ala-D-Ala)](n+1)-di-trans,octa-cis-undecaprenyl diphosphate + di-trans,octa-cis-undecaprenyl diphosphate + H(+). It participates in cell wall biogenesis; peptidoglycan biosynthesis. Functionally, peptidoglycan polymerase that catalyzes glycan chain elongation from lipid-linked precursors. The chain is Biosynthetic peptidoglycan transglycosylase from Burkholderia ambifaria (strain MC40-6).